The primary structure comprises 442 residues: C4-dicarboxylate transport protein 2 (442 aa).

Helical transmembrane passes span Gln-20–Tyr-39, Ala-52–Ala-74, Ala-89–Val-111, Val-141–Ala-158, Ile-162–Val-179, Leu-200–Gly-221, Leu-231–Val-253, Ile-342–Ile-364, and Ala-368–Val-387.

This sequence belongs to the dicarboxylate/amino acid:cation symporter (DAACS) (TC 2.A.23) family.

The protein resides in the cell inner membrane. Its function is as follows. Responsible for the transport of dicarboxylates such as succinate, fumarate, and malate from the periplasm across the membrane. This transport system plays an important role in the energy supply of rhizobium-legume symbionts. The chain is C4-dicarboxylate transport protein 2 (dctA2) from Mesorhizobium japonicum (strain LMG 29417 / CECT 9101 / MAFF 303099) (Mesorhizobium loti (strain MAFF 303099)).